Here is a 109-residue protein sequence, read N- to C-terminus: Nucleoid-associated protein Sama_1311 (109 aa).

The protein belongs to the YbaB/EbfC family. As to quaternary structure, homodimer.

It localises to the cytoplasm. The protein resides in the nucleoid. Functionally, binds to DNA and alters its conformation. May be involved in regulation of gene expression, nucleoid organization and DNA protection. The sequence is that of Nucleoid-associated protein Sama_1311 from Shewanella amazonensis (strain ATCC BAA-1098 / SB2B).